The primary structure comprises 822 residues: Probable phosphoketolase (822 aa).

This sequence belongs to the XFP family. The cofactor is thiamine diphosphate.

The polypeptide is Probable phosphoketolase (Nocardia farcinica (strain IFM 10152)).